The primary structure comprises 236 residues: Baculoviral IAP repeat-containing protein 8 (236 aa).

The BIR repeat unit spans residues 7–70; that stretch reads WLITFGTWMY…KWYPGCKYLL (64 aa). Residues Cys-39, Cys-42, His-59, and Cys-66 each contribute to the Zn(2+) site. The RING-type zinc-finger motif lies at 189 to 224; the sequence is CKICMDRHIAVVFIPCGHLVTCKQCAEAVDRCPMCN.

This sequence belongs to the IAP family. Binds to caspase-9.

The protein resides in the cytoplasm. Protects against apoptosis mediated by BAX. This chain is Baculoviral IAP repeat-containing protein 8 (BIRC8), found in Gorilla gorilla gorilla (Western lowland gorilla).